Reading from the N-terminus, the 134-residue chain is uncharacterized protein (134 aa).

Residues 59-92 (VSKPKRRSPHPHGNKAADKRKTTEKEPERKKRVG) form a disordered region. Positions 61–71 (KPKRRSPHPHG) are enriched in basic residues. Residues 73-87 (KAADKRKTTEKEPER) are compositionally biased toward basic and acidic residues.

This is an uncharacterized protein from Saccharomyces cerevisiae (strain ATCC 204508 / S288c) (Baker's yeast).